The following is a 662-amino-acid chain: UvrABC system protein B (662 aa).

In terms of domain architecture, Helicase ATP-binding spans 25–412 (EGVRRGYRYQ…SEQVVEQLIR (388 aa)). 38–45 (GVTGSGKT) is a binding site for ATP. Residues 91-114 (YYDYYQPEAYVPETDTYIEKDASI) carry the Beta-hairpin motif. In terms of domain architecture, Helicase C-terminal spans 429–595 (QVDDLIAEIR…TVVKGVRDVI (167 aa)). Positions 620–655 (KSTIEQLEKEMRQAAIELQFEKAAKLRDMILELRKQ) constitute a UVR domain.

Belongs to the UvrB family. Forms a heterotetramer with UvrA during the search for lesions. Interacts with UvrC in an incision complex.

The protein localises to the cytoplasm. The UvrABC repair system catalyzes the recognition and processing of DNA lesions. A damage recognition complex composed of 2 UvrA and 2 UvrB subunits scans DNA for abnormalities. Upon binding of the UvrA(2)B(2) complex to a putative damaged site, the DNA wraps around one UvrB monomer. DNA wrap is dependent on ATP binding by UvrB and probably causes local melting of the DNA helix, facilitating insertion of UvrB beta-hairpin between the DNA strands. Then UvrB probes one DNA strand for the presence of a lesion. If a lesion is found the UvrA subunits dissociate and the UvrB-DNA preincision complex is formed. This complex is subsequently bound by UvrC and the second UvrB is released. If no lesion is found, the DNA wraps around the other UvrB subunit that will check the other stand for damage. The chain is UvrABC system protein B from Caldanaerobacter subterraneus subsp. tengcongensis (strain DSM 15242 / JCM 11007 / NBRC 100824 / MB4) (Thermoanaerobacter tengcongensis).